The following is a 132-amino-acid chain: MVEPFLGTWKLVSSENFEDYMKELGVNFAARNMAGLVKPTVTISVDGKMMTIRTESSFQDTKISFKLGEEFDETTADNRKVKSTITLENGSMIHVQKWLGKETTIKRKIVDEKMVVECKMNNIVSTRIYEKV.

Residues Ser-13, Ser-14, Ser-44, and Ser-91 each carry the phosphoserine modification.

The protein belongs to the calycin superfamily. Fatty-acid binding protein (FABP) family.

It is found in the cytoplasm. This Homo sapiens (Human) protein is Fatty acid-binding protein 9 (FABP9).